A 484-amino-acid chain; its full sequence is ATP synthase subunit beta (484 aa).

152–159 (GGAGVGKT) serves as a coordination point for ATP.

It belongs to the ATPase alpha/beta chains family. As to quaternary structure, F-type ATPases have 2 components, CF(1) - the catalytic core - and CF(0) - the membrane proton channel. CF(1) has five subunits: alpha(3), beta(3), gamma(1), delta(1), epsilon(1). CF(0) has three main subunits: a(1), b(2) and c(9-12). The alpha and beta chains form an alternating ring which encloses part of the gamma chain. CF(1) is attached to CF(0) by a central stalk formed by the gamma and epsilon chains, while a peripheral stalk is formed by the delta and b chains.

The protein localises to the cell inner membrane. It catalyses the reaction ATP + H2O + 4 H(+)(in) = ADP + phosphate + 5 H(+)(out). Produces ATP from ADP in the presence of a proton gradient across the membrane. The catalytic sites are hosted primarily by the beta subunits. The polypeptide is ATP synthase subunit beta (Campylobacter lari (strain RM2100 / D67 / ATCC BAA-1060)).